We begin with the raw amino-acid sequence, 197 residues long: Chitin synthase 3 (197 aa).

This sequence belongs to the chitin synthase family. Class III subfamily.

Its subcellular location is the cell membrane. It carries out the reaction [(1-&gt;4)-N-acetyl-beta-D-glucosaminyl](n) + UDP-N-acetyl-alpha-D-glucosamine = [(1-&gt;4)-N-acetyl-beta-D-glucosaminyl](n+1) + UDP + H(+). In terms of biological role, polymerizes chitin, a structural polymer of the cell wall and septum, by transferring the sugar moiety of UDP-GlcNAc to the non-reducing end of the growing chitin polymer. In Exophiala jeanselmei (Dematiaceous fungus), this protein is Chitin synthase 3 (CHS3).